The chain runs to 441 residues: tRNA (adenine(37)-N6)-methyltransferase (441 aa).

Positions 30–168 (TEPVGYLESC…YIAEYDSPQN (139 aa)) constitute a TsaA-like domain. S-adenosyl-L-methionine-binding positions include 47–49 (PRQ), 90–91 (HK), Arg117, Leu127, and 148–151 (IHGT). A compositionally biased stretch (polar residues) spans 179–192 (QNNQHTPNTVSQSD). 2 disordered regions span residues 179–231 (QNNQ…EENY) and 264–284 (SSVAEEQIGPYCPEKSFSEKG).

It belongs to the tRNA methyltransferase O family.

It carries out the reaction N(6)-L-threonylcarbamoyladenosine(37) in tRNA + S-adenosyl-L-methionine = N(6)-methyl,N(6)-L-threonylcarbamoyladenosine(37) in tRNA + S-adenosyl-L-homocysteine + H(+). S-adenosyl-L-methionine-dependent methyltransferase responsible for the addition of the methyl group in the formation of N6-methyl-N6-threonylcarbamoyladenosine at position 37 (m(6)t(6)A37) of the tRNA anticodon loop of tRNA(Ser)(GCU). The methyl group of m(6)t(6)A37 may improve the efficiency of the tRNA decoding ability. The sequence is that of tRNA (adenine(37)-N6)-methyltransferase from Homo sapiens (Human).